The following is a 445-amino-acid chain: Phosphoglucosamine mutase (445 aa).

The active-site Phosphoserine intermediate is serine 102. Residues serine 102, aspartate 241, aspartate 243, and aspartate 245 each contribute to the Mg(2+) site. Phosphoserine is present on serine 102.

This sequence belongs to the phosphohexose mutase family. Mg(2+) serves as cofactor. In terms of processing, activated by phosphorylation.

It catalyses the reaction alpha-D-glucosamine 1-phosphate = D-glucosamine 6-phosphate. Functionally, catalyzes the conversion of glucosamine-6-phosphate to glucosamine-1-phosphate. This chain is Phosphoglucosamine mutase, found in Klebsiella pneumoniae (strain 342).